The chain runs to 317 residues: Acetyl-coenzyme A carboxylase carboxyl transferase subunit alpha (317 aa).

The region spanning 33–294 (NLDDEIARLQ…KQRLLEDLAD (262 aa)) is the CoA carboxyltransferase C-terminal domain.

The protein belongs to the AccA family. In terms of assembly, acetyl-CoA carboxylase is a heterohexamer composed of biotin carboxyl carrier protein (AccB), biotin carboxylase (AccC) and two subunits each of ACCase subunit alpha (AccA) and ACCase subunit beta (AccD).

The protein localises to the cytoplasm. The catalysed reaction is N(6)-carboxybiotinyl-L-lysyl-[protein] + acetyl-CoA = N(6)-biotinyl-L-lysyl-[protein] + malonyl-CoA. Its pathway is lipid metabolism; malonyl-CoA biosynthesis; malonyl-CoA from acetyl-CoA: step 1/1. In terms of biological role, component of the acetyl coenzyme A carboxylase (ACC) complex. First, biotin carboxylase catalyzes the carboxylation of biotin on its carrier protein (BCCP) and then the CO(2) group is transferred by the carboxyltransferase to acetyl-CoA to form malonyl-CoA. In Glaesserella parasuis serovar 5 (strain SH0165) (Haemophilus parasuis), this protein is Acetyl-coenzyme A carboxylase carboxyl transferase subunit alpha.